A 207-amino-acid chain; its full sequence is LexA repressor (207 aa).

Positions 28 to 47 (VREIARRFRITPRGAQLHLV) form a DNA-binding region, H-T-H motif. Active-site for autocatalytic cleavage activity residues include serine 119 and lysine 156.

The protein belongs to the peptidase S24 family. Homodimer.

The catalysed reaction is Hydrolysis of Ala-|-Gly bond in repressor LexA.. Represses a number of genes involved in the response to DNA damage (SOS response), including recA and lexA. In the presence of single-stranded DNA, RecA interacts with LexA causing an autocatalytic cleavage which disrupts the DNA-binding part of LexA, leading to derepression of the SOS regulon and eventually DNA repair. The polypeptide is LexA repressor (Thermotoga neapolitana (strain ATCC 49049 / DSM 4359 / NBRC 107923 / NS-E)).